A 433-amino-acid polypeptide reads, in one-letter code: Small ribosomal subunit biogenesis GTPase RsgA 1, mitochondrial (433 aa).

A disordered region spans residues 1 to 20 (MLRAKHIGKNYSSSLSPVLS). The CP-type G domain occupies 113 to 291 (SEILDPPVAN…LADTPGFNQP (179 aa)). 212-220 (GPSGVGKSS) is a binding site for GTP. Zn(2+) contacts are provided by cysteine 317, cysteine 322, histidine 324, and cysteine 330.

It belongs to the TRAFAC class YlqF/YawG GTPase family. RsgA subfamily. Monomer. Associates with 30S ribosomal subunit, binds 16S rRNA. Requires Zn(2+) as cofactor.

The protein localises to the mitochondrion. Functionally, one of several proteins that assist in the late maturation steps of the functional core of the 30S ribosomal subunit. Helps release RbfA from mature subunits. May play a role in the assembly of ribosomal proteins into the subunit. Circularly permuted GTPase that catalyzes slow GTP hydrolysis, GTPase activity is stimulated by the 30S ribosomal subunit. Required for embryo development. This Arabidopsis thaliana (Mouse-ear cress) protein is Small ribosomal subunit biogenesis GTPase RsgA 1, mitochondrial.